We begin with the raw amino-acid sequence, 118 residues long: Large ribosomal subunit protein uL18 (118 aa).

Belongs to the universal ribosomal protein uL18 family. As to quaternary structure, part of the 50S ribosomal subunit; part of the 5S rRNA/L5/L18/L25 subcomplex. Contacts the 5S and 23S rRNAs.

Its function is as follows. This is one of the proteins that bind and probably mediate the attachment of the 5S RNA into the large ribosomal subunit, where it forms part of the central protuberance. The protein is Large ribosomal subunit protein uL18 of Rickettsia felis (strain ATCC VR-1525 / URRWXCal2) (Rickettsia azadi).